Here is a 332-residue protein sequence, read N- to C-terminus: uncharacterized protein (332 aa).

The interval 306–332 (EKNTSEVTEPKTGPSGTKDNYHLHSIF) is disordered.

This is an uncharacterized protein from Homo sapiens (Human).